The sequence spans 232 residues: Ornithine carbamoyltransferase (232 aa).

Residues Gln15, Arg39, and 66-69 (HPTQ) contribute to the carbamoyl phosphate site. L-ornithine contacts are provided by residues Asn99, Asp163, and 167 to 168 (SM). Residues 204-207 (HCLP) and Thr232 contribute to the carbamoyl phosphate site.

The protein belongs to the aspartate/ornithine carbamoyltransferase superfamily. OTCase family.

It is found in the cytoplasm. It catalyses the reaction carbamoyl phosphate + L-ornithine = L-citrulline + phosphate + H(+). It functions in the pathway amino-acid biosynthesis; L-arginine biosynthesis; L-arginine from L-ornithine and carbamoyl phosphate: step 1/3. The chain is Ornithine carbamoyltransferase (argF) from Neisseria animalis.